We begin with the raw amino-acid sequence, 182 residues long: Bifunctional protein PyrR (182 aa).

Residues 100-112 carry the PRPP-binding motif; that stretch reads VVLVDDVLYTGRT.

The protein belongs to the purine/pyrimidine phosphoribosyltransferase family. PyrR subfamily. In terms of assembly, homodimer and homohexamer; in equilibrium.

It carries out the reaction UMP + diphosphate = 5-phospho-alpha-D-ribose 1-diphosphate + uracil. Regulates transcriptional attenuation of the pyrimidine nucleotide (pyr) operon by binding in a uridine-dependent manner to specific sites on pyr mRNA. This disrupts an antiterminator hairpin in the RNA and favors formation of a downstream transcription terminator, leading to a reduced expression of downstream genes. In terms of biological role, also displays a weak uracil phosphoribosyltransferase activity which is not physiologically significant. This Natranaerobius thermophilus (strain ATCC BAA-1301 / DSM 18059 / JW/NM-WN-LF) protein is Bifunctional protein PyrR.